The sequence spans 654 residues: Beta-mannosyltransferase 2 (654 aa).

Residues 1–37 (MLAWLRHRIRSYNTSTYSSILPSASFGKVYKIGTKLN) are Cytoplasmic-facing. Residues 38–58 (FTLLALCLLLACSVFFNYFYL) traverse the membrane as a helical segment. At 59-654 (ADNNGLDIDT…ANGNGKGSSS (596 aa)) the chain is on the extracellular side.

It belongs to the BMT family.

It is found in the membrane. Beta-mannosyltransferase involved in cell wall biosynthesis. Required for the addition of beta-mannose to the acid-labile fraction of cell wall phosphopeptidomannan. This chain is Beta-mannosyltransferase 2 (RHD1), found in Candida albicans (strain SC5314 / ATCC MYA-2876) (Yeast).